A 574-amino-acid chain; its full sequence is Eukaryotic translation initiation factor 3 subunit D (574 aa).

A disordered region spans residues 153 to 178; it reads QRRGGNARQGQRGQGGRFGGDRPKER. The span at 154–163 shows a compositional bias: low complexity; sequence RRGGNARQGQ. The interval 312 to 326 is RNA gate; the sequence is PVETLTVSETSAEPP. The segment at 555 to 574 is disordered; that stretch reads EGTFDSERESSEEENSDDDQ. The span at 564-574 shows a compositional bias: acidic residues; sequence SSEEENSDDDQ.

This sequence belongs to the eIF-3 subunit D family. In terms of assembly, component of the eukaryotic translation initiation factor 3 (eIF-3) complex.

It localises to the cytoplasm. MRNA cap-binding component of the eukaryotic translation initiation factor 3 (eIF-3) complex, which is involved in protein synthesis of a specialized repertoire of mRNAs and, together with other initiation factors, stimulates binding of mRNA and methionyl-tRNAi to the 40S ribosome. The eIF-3 complex specifically targets and initiates translation of a subset of mRNAs involved in cell proliferation. In the eIF-3 complex, eif3d specifically recognizes and binds the 7-methylguanosine cap of a subset of mRNAs. The polypeptide is Eukaryotic translation initiation factor 3 subunit D (Caenorhabditis briggsae).